Reading from the N-terminus, the 221-residue chain is Secreted protein BARF1 (221 aa).

A signal peptide spans 1–20; that stretch reads MARFIAQLLLLASCVAAGQA. 2 Ig-like domains span residues 21–120 and 124–220; these read VTAF…EHLS and PLTL…GYLS. Asn-95 is a glycosylation site (N-linked (GlcNAc...) asparagine; by host). Cys-146 and Cys-201 are oxidised to a cystine.

Homohexamer. Interacts with human CSF1. Post-translationally, phosphorylated on serine and threonine by host.

Its subcellular location is the secreted. Its function is as follows. Plays diverse functions in immunomodulation and oncogenicity, maybe by acting as a functional receptor for human CSF1. May inhibit interferon secretion from mononuclear cells. Exhibits oncogenic activity in vitro. This Epstein-Barr virus (strain B95-8) (HHV-4) protein is Secreted protein BARF1.